A 226-amino-acid chain; its full sequence is Large ribosomal subunit protein uL3 (226 aa).

Gln160 bears the N5-methylglutamine mark.

The protein belongs to the universal ribosomal protein uL3 family. In terms of assembly, part of the 50S ribosomal subunit. Forms a cluster with proteins L14 and L19. Methylated by PrmB.

One of the primary rRNA binding proteins, it binds directly near the 3'-end of the 23S rRNA, where it nucleates assembly of the 50S subunit. The polypeptide is Large ribosomal subunit protein uL3 (Leptothrix cholodnii (strain ATCC 51168 / LMG 8142 / SP-6) (Leptothrix discophora (strain SP-6))).